The chain runs to 146 residues: Hemoglobin subunit beta (146 aa).

At V1 the chain carries N-acetylvaline. Residues 2–146 enclose the Globin domain; it reads HMTDAEKKLV…VANALAHKYH (145 aa). T12 is modified (phosphothreonine). K59 bears the N6-acetyllysine mark. H63 lines the heme b pocket. At K82 the chain carries N6-acetyllysine. H92 lines the heme b pocket. Residue C93 is modified to S-nitrosocysteine. K144 is modified (N6-acetyllysine).

It belongs to the globin family. In terms of assembly, tetramer of two alpha and two different beta chains. Two external cysteine residues at beta-16 and beta-52 cause reversible polymerization to octamers and most likely irreversible formation of higher polymers. In terms of tissue distribution, red blood cells.

In terms of biological role, involved in oxygen transport from the lung to the various peripheral tissues. In Echinops telfairi (Lesser hedgehog tenrec), this protein is Hemoglobin subunit beta (HBB).